The chain runs to 65 residues: Small ribosomal subunit protein bS21 (65 aa).

This sequence belongs to the bacterial ribosomal protein bS21 family.

The protein is Small ribosomal subunit protein bS21 of Cytophaga hutchinsonii (strain ATCC 33406 / DSM 1761 / CIP 103989 / NBRC 15051 / NCIMB 9469 / D465).